Consider the following 501-residue polypeptide: 7-alpha-hydroxycholest-4-en-3-one 12-alpha-hydroxylase (501 aa).

Residues 1–21 form a helical membrane-spanning segment; the sequence is MVLWGPVLGALLVVIAGYLCL. Phosphoserine is present on S326. Residue C440 coordinates heme.

Belongs to the cytochrome P450 family. Requires heme as cofactor. As to expression, liver.

Its subcellular location is the endoplasmic reticulum membrane. The protein localises to the microsome membrane. The enzyme catalyses 7alpha-hydroxycholest-4-en-3-one + reduced [NADPH--hemoprotein reductase] + O2 = 7alpha,12alpha-dihydroxycholest-4-en-3-one + oxidized [NADPH--hemoprotein reductase] + H2O + H(+). It carries out the reaction 5beta-cholestane-3alpha,7alpha-diol + reduced [NADPH--hemoprotein reductase] + O2 = 5beta-cholestane-3alpha,7alpha,12alpha-triol + oxidized [NADPH--hemoprotein reductase] + H2O + H(+). The catalysed reaction is chenodeoxycholate + reduced [NADPH--hemoprotein reductase] + O2 = cholate + oxidized [NADPH--hemoprotein reductase] + H2O + H(+). The protein operates within lipid metabolism; bile acid biosynthesis. Functionally, a cytochrome P450 monooxygenase involved in primary bile acid biosynthesis. Catalyzes the 12alpha-hydroxylation of 7alpha-hydroxy-4-cholesten-3-one, an intermediate metabolite in cholic acid biosynthesis. Controls biliary balance of cholic acid and chenodeoxycholic acid, ultimately regulating the intestinal absorption of dietary lipids. Mechanistically, uses molecular oxygen inserting one oxygen atom into a substrate, and reducing the second into a water molecule, with two electrons provided by NADPH via cytochrome P450 reductase (CPR; NADPH--hemoprotein reductase). The chain is 7-alpha-hydroxycholest-4-en-3-one 12-alpha-hydroxylase from Homo sapiens (Human).